Reading from the N-terminus, the 373-residue chain is 4-hydroxy-3-methylbut-2-en-1-yl diphosphate synthase (flavodoxin) (373 aa).

[4Fe-4S] cluster contacts are provided by C269, C272, C304, and E311.

The protein belongs to the IspG family. [4Fe-4S] cluster serves as cofactor.

The catalysed reaction is (2E)-4-hydroxy-3-methylbut-2-enyl diphosphate + oxidized [flavodoxin] + H2O + 2 H(+) = 2-C-methyl-D-erythritol 2,4-cyclic diphosphate + reduced [flavodoxin]. It participates in isoprenoid biosynthesis; isopentenyl diphosphate biosynthesis via DXP pathway; isopentenyl diphosphate from 1-deoxy-D-xylulose 5-phosphate: step 5/6. Its function is as follows. Converts 2C-methyl-D-erythritol 2,4-cyclodiphosphate (ME-2,4cPP) into 1-hydroxy-2-methyl-2-(E)-butenyl 4-diphosphate. The sequence is that of 4-hydroxy-3-methylbut-2-en-1-yl diphosphate synthase (flavodoxin) from Baumannia cicadellinicola subsp. Homalodisca coagulata.